A 186-amino-acid polypeptide reads, in one-letter code: Lipid A palmitoyltransferase PagP (186 aa).

Positions 1-25 (MNVSKYVAIFSFVFIQLISVGKVFA) are cleaved as a signal peptide. Residues histidine 58, aspartate 101, and serine 102 contribute to the active site.

Belongs to the lipid A palmitoyltransferase family. Homodimer.

The protein resides in the cell outer membrane. The catalysed reaction is lipid A (E. coli) + a 1-hexadecanoyl-2-acyl-sn-glycero-3-phosphocholine = hepta-acyl lipid A (E. coli) + a 2-acyl-sn-glycero-3-phosphocholine. It catalyses the reaction lipid IIA + a 1-hexadecanoyl-2-acyl-sn-glycero-3-phosphocholine = lipid IIB + a 2-acyl-sn-glycero-3-phosphocholine. It carries out the reaction lipid IVA (E. coli) + a 1-hexadecanoyl-2-acyl-sn-glycero-3-phosphocholine = lipid IVB (E. coli) + a 2-acyl-sn-glycero-3-phosphocholine. Its function is as follows. Transfers a palmitate residue from the sn-1 position of a phospholipid to the N-linked hydroxymyristate on the proximal unit of lipid A or its precursors. This Escherichia coli O157:H7 protein is Lipid A palmitoyltransferase PagP.